The primary structure comprises 278 residues: Large ribosomal subunit protein uL2 (278 aa).

The interval glycine 222–lysine 278 is disordered.

It belongs to the universal ribosomal protein uL2 family. As to quaternary structure, part of the 50S ribosomal subunit. Forms a bridge to the 30S subunit in the 70S ribosome.

One of the primary rRNA binding proteins. Required for association of the 30S and 50S subunits to form the 70S ribosome, for tRNA binding and peptide bond formation. It has been suggested to have peptidyltransferase activity; this is somewhat controversial. Makes several contacts with the 16S rRNA in the 70S ribosome. This chain is Large ribosomal subunit protein uL2, found in Afipia carboxidovorans (strain ATCC 49405 / DSM 1227 / KCTC 32145 / OM5) (Oligotropha carboxidovorans).